Reading from the N-terminus, the 242-residue chain is Probable septum site-determining protein MinC (242 aa).

Belongs to the MinC family. Interacts with MinD and FtsZ.

Cell division inhibitor that blocks the formation of polar Z ring septums. Rapidly oscillates between the poles of the cell to destabilize FtsZ filaments that have formed before they mature into polar Z rings. Prevents FtsZ polymerization. This chain is Probable septum site-determining protein MinC, found in Buchnera aphidicola subsp. Schizaphis graminum (strain Sg).